A 386-amino-acid polypeptide reads, in one-letter code: 8-amino-7-oxononanoate synthase (386 aa).

Residue Arg26 participates in substrate binding. 104 to 105 (GY) contacts pyridoxal 5'-phosphate. His129 contacts substrate. The pyridoxal 5'-phosphate site is built by Ser176, His204, and Thr232. At Lys235 the chain carries N6-(pyridoxal phosphate)lysine. Residue Thr349 participates in substrate binding.

This sequence belongs to the class-II pyridoxal-phosphate-dependent aminotransferase family. BioF subfamily. Homodimer. It depends on pyridoxal 5'-phosphate as a cofactor.

The catalysed reaction is 6-carboxyhexanoyl-[ACP] + L-alanine + H(+) = (8S)-8-amino-7-oxononanoate + holo-[ACP] + CO2. Its pathway is cofactor biosynthesis; biotin biosynthesis. Catalyzes the decarboxylative condensation of pimeloyl-[acyl-carrier protein] and L-alanine to produce 8-amino-7-oxononanoate (AON), [acyl-carrier protein], and carbon dioxide. The protein is 8-amino-7-oxononanoate synthase of Chromohalobacter salexigens (strain ATCC BAA-138 / DSM 3043 / CIP 106854 / NCIMB 13768 / 1H11).